The following is a 238-amino-acid chain: NADH-quinone oxidoreductase subunit C (238 aa).

Positions 1-11 are enriched in polar residues; that stretch reads MSTSNGSANGT. A disordered region spans residues 1–20; it reads MSTSNGSANGTNGVGLPRGD.

Belongs to the complex I 30 kDa subunit family. NDH-1 is composed of 14 different subunits. Subunits NuoB, C, D, E, F, and G constitute the peripheral sector of the complex.

It is found in the cell membrane. The enzyme catalyses a quinone + NADH + 5 H(+)(in) = a quinol + NAD(+) + 4 H(+)(out). In terms of biological role, NDH-1 shuttles electrons from NADH, via FMN and iron-sulfur (Fe-S) centers, to quinones in the respiratory chain. The immediate electron acceptor for the enzyme in this species is believed to be a menaquinone. Couples the redox reaction to proton translocation (for every two electrons transferred, four hydrogen ions are translocated across the cytoplasmic membrane), and thus conserves the redox energy in a proton gradient. In Mycolicibacterium smegmatis (strain ATCC 700084 / mc(2)155) (Mycobacterium smegmatis), this protein is NADH-quinone oxidoreductase subunit C.